The chain runs to 481 residues: GTPase Obg (481 aa).

Positions threonine 2–valine 159 constitute an Obg domain. The 171-residue stretch at alanine 160 to threonine 330 folds into the OBG-type G domain. GTP-binding positions include glycine 166–serine 173, phenylalanine 191–valine 195, aspartate 212–glycine 215, asparagine 282–aspartate 285, and serine 311–alanine 313. Mg(2+) contacts are provided by serine 173 and threonine 193. The 79-residue stretch at proline 348 to proline 426 folds into the OCT domain. The segment covering glycine 439 to alanine 452 has biased composition (basic and acidic residues). Positions glycine 439–glutamate 481 are disordered. Over residues aspartate 468–glutamate 481 the composition is skewed to acidic residues.

This sequence belongs to the TRAFAC class OBG-HflX-like GTPase superfamily. OBG GTPase family. In terms of assembly, monomer. Mg(2+) serves as cofactor.

The protein localises to the cytoplasm. Functionally, an essential GTPase which binds GTP, GDP and possibly (p)ppGpp with moderate affinity, with high nucleotide exchange rates and a fairly low GTP hydrolysis rate. Plays a role in control of the cell cycle, stress response, ribosome biogenesis and in those bacteria that undergo differentiation, in morphogenesis control. The chain is GTPase Obg from Salinispora tropica (strain ATCC BAA-916 / DSM 44818 / JCM 13857 / NBRC 105044 / CNB-440).